Here is a 941-residue protein sequence, read N- to C-terminus: Pre-mRNA-processing factor 6 (941 aa).

Residues 1–79 form a disordered region; sequence MNKKKKPFLG…DEDLNDTNYD (79 aa). Basic and acidic residues predominate over residues 39–65; sequence DANDPVDDRHAPPGKRTVGDQMKKNQA. Residues 66-78 show a composition bias toward acidic residues; it reads ADDDDEDLNDTNY. Ser143 carries the phosphoserine modification. Thr180, Thr266, and Thr275 each carry phosphothreonine. Position 279 is a phosphoserine (Ser279). HAT repeat units follow at residues 384–416, 418–444, 445–476, 554–586, 588–620, 622–654, 689–721, 723–755, and 855–887; these read TDIR…LEEP, DARI…ARLE, TYEN…LEEA, NALE…FEKN, GTRE…SKWL, GDVP…LESE, DNIR…IEEQ, EMME…LEEK, and RKIT…FELQ.

As to quaternary structure, identified in the spliceosome B complex. Identified in the spliceosome C complex. Associates with the U5 snRNP particle. Component of the U4/U6-U5 tri-snRNP complex composed of the U4, U6 and U5 snRNAs and at least PRPF3, PRPF4, PRPF6, PRPF8, PRPF31, SNRNP200, TXNL4A, SNRNP40, DDX23, CD2BP2, PPIH, SNU13, EFTUD2, SART1 and USP39, LSm proteins LSm2-8 and Sm proteins. Interacts with ARAF. Interacts with AR and NR3C1, but not ESR1, independently of the presence of hormones. Interacts with USH1G. In terms of processing, phosphorylated by PRP4K during spliceosome assembly. Widely expressed.

The protein resides in the nucleus. It is found in the nucleoplasm. It localises to the nucleus speckle. Its function is as follows. Involved in pre-mRNA splicing as component of the U4/U6-U5 tri-snRNP complex, one of the building blocks of the spliceosome. Enhances dihydrotestosterone-induced transactivation activity of AR, as well as dexamethasone-induced transactivation activity of NR3C1, but does not affect estrogen-induced transactivation. The polypeptide is Pre-mRNA-processing factor 6 (Homo sapiens (Human)).